A 77-amino-acid chain; its full sequence is Translation initiation factor IF-1, chloroplastic (77 aa).

The S1-like domain occupies 1–71 (MKEQKLIHEG…TRGRIIYRLR (71 aa)).

It belongs to the IF-1 family. As to quaternary structure, component of the 30S ribosomal translation pre-initiation complex which assembles on the 30S ribosome in the order IF-2 and IF-3, IF-1 and N-formylmethionyl-tRNA(fMet); mRNA recruitment can occur at any time during PIC assembly.

It is found in the plastid. Its subcellular location is the chloroplast. One of the essential components for the initiation of protein synthesis. Stabilizes the binding of IF-2 and IF-3 on the 30S subunit to which N-formylmethionyl-tRNA(fMet) subsequently binds. Helps modulate mRNA selection, yielding the 30S pre-initiation complex (PIC). Upon addition of the 50S ribosomal subunit IF-1, IF-2 and IF-3 are released leaving the mature 70S translation initiation complex. This Ceratophyllum demersum (Rigid hornwort) protein is Translation initiation factor IF-1, chloroplastic.